A 320-amino-acid polypeptide reads, in one-letter code: tRNA uridine(34) hydroxylase (320 aa).

The Rhodanese domain maps to 123–217 (EDEDTVILDA…YGKDPETKGQ (95 aa)). The active-site Cysteine persulfide intermediate is the cysteine 177.

It belongs to the TrhO family.

It catalyses the reaction uridine(34) in tRNA + AH2 + O2 = 5-hydroxyuridine(34) in tRNA + A + H2O. In terms of biological role, catalyzes oxygen-dependent 5-hydroxyuridine (ho5U) modification at position 34 in tRNAs. The polypeptide is tRNA uridine(34) hydroxylase (Staphylococcus haemolyticus (strain JCSC1435)).